Here is an 859-residue protein sequence, read N- to C-terminus: Auxin response factor 2 (859 aa).

The segment at 1–48 (MASSEVSMKGNRGGDNFSSSGFSDPKETRNVSVAGEGQKSNSTRSAAA) is disordered. Residues 14 to 23 (GDNFSSSGFS) are compositionally biased toward low complexity. A DNA-binding region (TF-B3) is located at residues 164–266 (FCKTLTASDT…ELRVGVRRAM (103 aa)). Over residues 396 to 407 (LAPPALSPVPMP) the composition is skewed to pro residues. 3 disordered regions span residues 396 to 442 (LAPP…LPAS), 687 to 736 (IASP…RSCT), and 829 to 859 (RSEE…AGNS). Composition is skewed to polar residues over residues 416-426 (IAPSSPDSSML) and 695-704 (LSDQSKGSKS). One can recognise a PB1 domain in the interval 733–817 (RSCTKVHKQG…RKIFIYTKEE (85 aa)). Over residues 847–859 (SASNPSLSSAGNS) the composition is skewed to polar residues.

This sequence belongs to the ARF family. As to quaternary structure, homodimers and heterodimers. Interacts with ARF1. As to expression, expressed in the whole plant.

Its subcellular location is the nucleus. Functionally, auxin response factors (ARFs) are transcriptional factors that bind specifically to the DNA sequence 5'-TGTCTC-3' found in the auxin-responsive promoter elements (AuxREs). Could act as transcriptional activator or repressor. Formation of heterodimers with Aux/IAA proteins may alter their ability to modulate early auxin response genes expression. Promotes flowering, stamen development, floral organ abscission and fruit dehiscence. Functions independently of ethylene and cytokinin response pathways. May act as a repressor of cell division and organ growth. In Arabidopsis thaliana (Mouse-ear cress), this protein is Auxin response factor 2 (ARF2).